A 54-amino-acid chain; its full sequence is Large ribosomal subunit protein bL33 (54 aa).

Belongs to the bacterial ribosomal protein bL33 family.

This is Large ribosomal subunit protein bL33 from Herpetosiphon aurantiacus (strain ATCC 23779 / DSM 785 / 114-95).